A 203-amino-acid polypeptide reads, in one-letter code: GTP cyclohydrolase-2 (203 aa).

Position 49–53 (49–53) interacts with GTP; that stretch reads RIHSE. Cys54, Cys65, and Cys67 together coordinate Zn(2+). Residues Gln70, 92–94, and Thr114 each bind GTP; that span reads EGR. Asp126 functions as the Proton acceptor in the catalytic mechanism. Arg128 (nucleophile) is an active-site residue. GTP-binding residues include Thr149 and Lys154.

It belongs to the GTP cyclohydrolase II family. The cofactor is Zn(2+).

It carries out the reaction GTP + 4 H2O = 2,5-diamino-6-hydroxy-4-(5-phosphoribosylamino)-pyrimidine + formate + 2 phosphate + 3 H(+). It participates in cofactor biosynthesis; riboflavin biosynthesis; 5-amino-6-(D-ribitylamino)uracil from GTP: step 1/4. In terms of biological role, catalyzes the conversion of GTP to 2,5-diamino-6-ribosylamino-4(3H)-pyrimidinone 5'-phosphate (DARP), formate and pyrophosphate. The protein is GTP cyclohydrolase-2 of Shewanella oneidensis (strain ATCC 700550 / JCM 31522 / CIP 106686 / LMG 19005 / NCIMB 14063 / MR-1).